The sequence spans 420 residues: Serine hydroxymethyltransferase (420 aa).

(6S)-5,6,7,8-tetrahydrofolate-binding positions include Leu121 and 125 to 127 (GHL). Lys230 is subject to N6-(pyridoxal phosphate)lysine. Residues Glu246 and 354-356 (SPF) contribute to the (6S)-5,6,7,8-tetrahydrofolate site.

This sequence belongs to the SHMT family. As to quaternary structure, homodimer. Requires pyridoxal 5'-phosphate as cofactor.

The protein resides in the cytoplasm. It catalyses the reaction (6R)-5,10-methylene-5,6,7,8-tetrahydrofolate + glycine + H2O = (6S)-5,6,7,8-tetrahydrofolate + L-serine. Its pathway is one-carbon metabolism; tetrahydrofolate interconversion. It functions in the pathway amino-acid biosynthesis; glycine biosynthesis; glycine from L-serine: step 1/1. In terms of biological role, catalyzes the reversible interconversion of serine and glycine with tetrahydrofolate (THF) serving as the one-carbon carrier. This reaction serves as the major source of one-carbon groups required for the biosynthesis of purines, thymidylate, methionine, and other important biomolecules. Also exhibits THF-independent aldolase activity toward beta-hydroxyamino acids, producing glycine and aldehydes, via a retro-aldol mechanism. This Rickettsia massiliae (strain Mtu5) protein is Serine hydroxymethyltransferase.